The primary structure comprises 54 residues: MGMSFSHLLIVLLIIFVLFGAGKLPQVMSDLAKGLKAFKDGMKDDGNDNDRKNN.

The helical transmembrane segment at 1–21 (MGMSFSHLLIVLLIIFVLFGA) threads the bilayer.

This sequence belongs to the TatA/E family. In terms of assembly, the Tat system comprises two distinct complexes: a TatABC complex, containing multiple copies of TatA, TatB and TatC subunits, and a separate TatA complex, containing only TatA subunits. Substrates initially bind to the TatABC complex, which probably triggers association of the separate TatA complex to form the active translocon.

The protein localises to the cell inner membrane. In terms of biological role, part of the twin-arginine translocation (Tat) system that transports large folded proteins containing a characteristic twin-arginine motif in their signal peptide across membranes. TatA could form the protein-conducting channel of the Tat system. The chain is Sec-independent protein translocase protein TatA from Rickettsia canadensis (strain McKiel).